We begin with the raw amino-acid sequence, 425 residues long: MQFENTREFAKKLDNEDKISKYRDEFIFPKVNGKDVIYFVGNSLGLQPKTARKYVDEVMKDWAELAVEGHFYAEKSWWDYHERFSEKLARVVGANPSEVTVMNTLTVNLHLLMVSFYRPSGKRYKIICEEKAFPSDQYMISSQVRFHGYEPSDAIVEIMKREGENNFRTEDILKKIEEVGEECALVLIGGVNYYTGQVFDMETITKAGHDIGAFVGWDLAHGAGNIELKLSEWNVDFAAWCSYKYMNSGPGNASGCFINKKYHNKKDIPRFEGWWGHNKERRFLMEPEFQPEPTADAWQISNAPILALAPYLASLEMFDEVGMPALIEKRNKIVAYLEFVLHEIDEEVDSSFEIITPADQNERGTQLSVFLHGEGKELFRYLMDQGVITDWREPNVIRLAPAPFYCSFEDMYEFGQILKKGILSK.

Pyridoxal 5'-phosphate-binding positions include L105, T106, 133–136 (FPSD), D218, H221, and Y243. N6-(pyridoxal phosphate)lysine is present on K244. 2 residues coordinate pyridoxal 5'-phosphate: W274 and N302.

It belongs to the kynureninase family. In terms of assembly, homodimer. Requires pyridoxal 5'-phosphate as cofactor.

The catalysed reaction is L-kynurenine + H2O = anthranilate + L-alanine + H(+). It catalyses the reaction 3-hydroxy-L-kynurenine + H2O = 3-hydroxyanthranilate + L-alanine + H(+). Its pathway is amino-acid degradation; L-kynurenine degradation; L-alanine and anthranilate from L-kynurenine: step 1/1. It participates in cofactor biosynthesis; NAD(+) biosynthesis; quinolinate from L-kynurenine: step 2/3. Functionally, catalyzes the cleavage of L-kynurenine (L-Kyn) and L-3-hydroxykynurenine (L-3OHKyn) into anthranilic acid (AA) and 3-hydroxyanthranilic acid (3-OHAA), respectively. This chain is Kynureninase, found in Christiangramia forsetii (strain DSM 17595 / CGMCC 1.15422 / KT0803) (Gramella forsetii).